Here is a 355-residue protein sequence, read N- to C-terminus: GPN-loop GTPase 1 (355 aa).

The disordered stretch occupies residues methionine 1 to lysine 30. Residues proline 9–proline 21 show a composition bias toward low complexity. Glycine 40–threonine 45 lines the GTP pocket. The Gly-Pro-Asn (GPN)-loop; involved in dimer interface signature appears at glycine 97 to asparagine 99. Position 200–203 (asparagine 200–aspartate 203) interacts with GTP. Positions glutamate 286 to lysine 311 form a coiled coil.

Belongs to the GPN-loop GTPase family. As to quaternary structure, heterodimer with GPN3. Binds to RNA polymerase II (RNAPII).

Its subcellular location is the cytoplasm. The protein localises to the nucleus. Small GTPase required for proper nuclear import of RNA polymerase II (RNAPII). May act at an RNAP assembly step prior to nuclear import. The chain is GPN-loop GTPase 1 from Caenorhabditis elegans.